Reading from the N-terminus, the 327-residue chain is Endo-1,4-beta-xylanase A (327 aa).

Residues 1–323 enclose the GH10 domain; the sequence is AASGLEAAMK…KPSYTSTLNT (323 aa). Residues C81 and C123 are joined by a disulfide bond. The N-linked (GlcNAc...) asparagine glycan is linked to N101. Catalysis depends on E131, which acts as the Proton donor. E245 (nucleophile) is an active-site residue. The cysteines at positions 273 and 279 are disulfide-linked.

It belongs to the glycosyl hydrolase 10 (cellulase F) family. Monomer.

It localises to the secreted. The protein resides in the extracellular space. It carries out the reaction Endohydrolysis of (1-&gt;4)-beta-D-xylosidic linkages in xylans.. It functions in the pathway glycan degradation; xylan degradation. Catalyzes the hydrolysis of the internal glycosidic bonds in heteroxylans, releasing mainly xylobiose and xylotriose. Most active on oat-spelt xylan. This chain is Endo-1,4-beta-xylanase A, found in Fusarium oxysporum f. sp. lycopersici (strain 4287 / CBS 123668 / FGSC 9935 / NRRL 34936) (Fusarium vascular wilt of tomato).